The chain runs to 442 residues: MTTSQQPPERVVVVGGQDWDQVVAAARQNAAEHAGERIVVNMGPQHPSTHGVLRLILEIEGEIIVEARCGIGYLHTGIEKNLEFRNWTQGVTFVTRMDYLSPFFNETAYCLGVEKLLGITDAIPERASVIRVMMMELNRISSHLVALATGGMELGAMTAMFLGFRERELILSVFETITGLRMNNAYIRPGGVAADLPDEALPQVRDLLTLLPKRLRDMEDLLNENYIWKARTQGIGYLDLTGCMALGITGPVLRSTGLPHDLRKAQPYCGYETYDFDVVTDDQCDSYGRYLIRVKEMHQSIRIVEQCVQRLERSVGAPVMITDKKLAWPADLKVGPDGLGNSPEHIAKIMGHSMEGLIHHFKLVTEGIRVPAGQVYVAVESPRGELGVHMVSDGGTRPYRVHYRDPSFTNLQAVAAMCEGGMVADAITAVASIDPVMGGVDR.

It belongs to the complex I 49 kDa subunit family. NDH-1 is composed of 14 different subunits. Subunits NuoB, C, D, E, F, and G constitute the peripheral sector of the complex.

The protein localises to the cell membrane. It carries out the reaction a quinone + NADH + 5 H(+)(in) = a quinol + NAD(+) + 4 H(+)(out). Its function is as follows. NDH-1 shuttles electrons from NADH, via FMN and iron-sulfur (Fe-S) centers, to quinones in the respiratory chain. The immediate electron acceptor for the enzyme in this species is believed to be a menaquinone. Couples the redox reaction to proton translocation (for every two electrons transferred, four hydrogen ions are translocated across the cytoplasmic membrane), and thus conserves the redox energy in a proton gradient. This is NADH-quinone oxidoreductase subunit D from Mycolicibacterium vanbaalenii (strain DSM 7251 / JCM 13017 / BCRC 16820 / KCTC 9966 / NRRL B-24157 / PYR-1) (Mycobacterium vanbaalenii).